We begin with the raw amino-acid sequence, 368 residues long: P2X receptor C (368 aa).

Topologically, residues 1-24 are cytoplasmic; sequence MLDWDSILAYNTIKVVRIRDRRLG. A helical transmembrane segment spans residues 25–45; the sequence is ILHLIFMIAIISYVVIYSAII. The Lumenal portion of the chain corresponds to 46–368; it reads KKGYLSIEEP…DKLYHNIEAL (323 aa). The interval 282 to 295 is pore-forming motif; that stretch reads RHAIRLIFIQTGVI.

The protein belongs to the P2X receptor family.

The protein resides in the contractile vacuole membrane. Its function is as follows. P2X receptors are ligand-gated ion channels that play a role in intracellular calcium signaling. ATP does not evoke inward currents in p2xC. Not essential for osmoregulation. This chain is P2X receptor C (p2xC), found in Dictyostelium discoideum (Social amoeba).